Consider the following 336-residue polypeptide: Dihydroorotate dehydrogenase (quinone) (336 aa).

FMN contacts are provided by residues Ala-62–Lys-66 and Thr-86. Lys-66 provides a ligand contact to substrate. Residue Asn-111–Phe-115 coordinates substrate. Positions 139 and 172 each coordinate FMN. Asn-172 serves as a coordination point for substrate. The active-site Nucleophile is the Ser-175. Residue Asn-177 coordinates substrate. The FMN site is built by Lys-217 and Thr-245. Asn-246 to Thr-247 contacts substrate. FMN is bound by residues Gly-268, Gly-297, and Tyr-318 to Ser-319.

The protein belongs to the dihydroorotate dehydrogenase family. Type 2 subfamily. Monomer. Requires FMN as cofactor.

The protein localises to the cell membrane. The catalysed reaction is (S)-dihydroorotate + a quinone = orotate + a quinol. Its pathway is pyrimidine metabolism; UMP biosynthesis via de novo pathway; orotate from (S)-dihydroorotate (quinone route): step 1/1. Catalyzes the conversion of dihydroorotate to orotate with quinone as electron acceptor. The protein is Dihydroorotate dehydrogenase (quinone) of Escherichia fergusonii (strain ATCC 35469 / DSM 13698 / CCUG 18766 / IAM 14443 / JCM 21226 / LMG 7866 / NBRC 102419 / NCTC 12128 / CDC 0568-73).